Consider the following 164-residue polypeptide: Transcription antitermination protein NusB (164 aa).

Belongs to the NusB family.

Involved in transcription antitermination. Required for transcription of ribosomal RNA (rRNA) genes. Binds specifically to the boxA antiterminator sequence of the ribosomal RNA (rrn) operons. This is Transcription antitermination protein NusB from Chlorobaculum parvum (strain DSM 263 / NCIMB 8327) (Chlorobium vibrioforme subsp. thiosulfatophilum).